The primary structure comprises 445 residues: Methionine aminopeptidase 2 (445 aa).

The interval 1–80 (MAAQVASGVG…TSKVQTEPPR (80 aa)) is disordered. Residues 57-71 (AKKKKKKTKKKKKGT) are compositionally biased toward basic residues. His-195 contacts substrate. A divalent metal cation contacts are provided by Asp-215, Asp-226, and His-295. Residue His-303 participates in substrate binding. 2 residues coordinate a divalent metal cation: Glu-331 and Glu-426.

The protein belongs to the peptidase M24A family. Methionine aminopeptidase eukaryotic type 2 subfamily. The cofactor is Co(2+). Requires Zn(2+) as cofactor. Mn(2+) is required as a cofactor. Fe(2+) serves as cofactor.

It is found in the cytoplasm. The enzyme catalyses Release of N-terminal amino acids, preferentially methionine, from peptides and arylamides.. Its function is as follows. Cotranslationally removes the N-terminal methionine from nascent proteins. The N-terminal methionine is often cleaved when the second residue in the primary sequence is small and uncharged (Met-Ala-, Cys, Gly, Pro, Ser, Thr, or Val). This Paracoccidioides brasiliensis (strain Pb03) protein is Methionine aminopeptidase 2.